Reading from the N-terminus, the 436-residue chain is Trigger factor (436 aa).

One can recognise a PPIase FKBP-type domain in the interval 163–248 (GDRVVLDFAG…VKEVAEGVLP (86 aa)).

The protein belongs to the FKBP-type PPIase family. Tig subfamily.

Its subcellular location is the cytoplasm. It carries out the reaction [protein]-peptidylproline (omega=180) = [protein]-peptidylproline (omega=0). Functionally, involved in protein export. Acts as a chaperone by maintaining the newly synthesized protein in an open conformation. Functions as a peptidyl-prolyl cis-trans isomerase. In Bordetella pertussis (strain Tohama I / ATCC BAA-589 / NCTC 13251), this protein is Trigger factor.